Here is a 95-residue protein sequence, read N- to C-terminus: Large ribosomal subunit protein eL43 (95 aa).

Residues 38–59 (CPDCGSEAVSREGTGIWQCGKC) form a C4-type zinc finger.

The protein belongs to the eukaryotic ribosomal protein eL43 family. It depends on Zn(2+) as a cofactor.

The sequence is that of Large ribosomal subunit protein eL43 from Halobacterium salinarum (strain ATCC 29341 / DSM 671 / R1).